The sequence spans 715 residues: Phosphatidylinositol 4-phosphate 5-kinase 6 (715 aa).

The segment covering 1–13 has biased composition (basic and acidic residues); sequence MSVAHADDADDYS. The tract at residues 1–21 is disordered; the sequence is MSVAHADDADDYSRPTGESYH. MORN repeat units lie at residues 32–54, 55–77, 78–100, 101–123, 124–146, 147–169, 170–192, and 193–214; these read YTGQ…DGCM, YVGD…SGAT, YEGD…SGDL, YRGS…NGDC, YDGE…NENH, YIGQ…NGNR, YDGS…DGSF, and YVGV…STSS. The tract at residues 253-306 is disordered; it reads GASEQSSSGNRTKNSERPRRRSVDGRVSNGEMELRSNGSGYLQVDDNAESTRSS. The segment covering 255–264 has biased composition (polar residues); it reads SEQSSSGNRT. A compositionally biased stretch (basic and acidic residues) spans 265–276; that stretch reads KNSERPRRRSVD. The 391-residue stretch at 321–711 folds into the PIPK domain; that stretch reads TISKGHKNYE…RFRDFIFRVF (391 aa). The segment at 671-692 is activation loop; it reads YDISKKLEHAYKSMQYDPTSIS.

The enzyme catalyses a 1,2-diacyl-sn-glycero-3-phospho-(1D-myo-inositol 4-phosphate) + ATP = a 1,2-diacyl-sn-glycero-3-phospho-(1D-myo-inositol-4,5-bisphosphate) + ADP + H(+). This is Phosphatidylinositol 4-phosphate 5-kinase 6 (PIP5K6) from Arabidopsis thaliana (Mouse-ear cress).